Here is a 427-residue protein sequence, read N- to C-terminus: Phosphoglucosamine mutase (427 aa).

The active-site Phosphoserine intermediate is Ser-94. Mg(2+) contacts are provided by Ser-94, Asp-228, Asp-230, and Asp-232. The residue at position 94 (Ser-94) is a Phosphoserine.

This sequence belongs to the phosphohexose mutase family. Mg(2+) serves as cofactor. In terms of processing, activated by phosphorylation.

It carries out the reaction alpha-D-glucosamine 1-phosphate = D-glucosamine 6-phosphate. Functionally, catalyzes the conversion of glucosamine-6-phosphate to glucosamine-1-phosphate. The chain is Phosphoglucosamine mutase from Thermotoga sp. (strain RQ2).